The following is a 37-amino-acid chain: Large ribosomal subunit protein bL36 (37 aa).

Belongs to the bacterial ribosomal protein bL36 family.

In Solidesulfovibrio magneticus (strain ATCC 700980 / DSM 13731 / RS-1) (Desulfovibrio magneticus), this protein is Large ribosomal subunit protein bL36.